Here is a 479-residue protein sequence, read N- to C-terminus: uncharacterized protein (479 aa).

The tract at residues 180 to 203 (LGGEHSDSTNTELANPSSTTTRIT) is disordered. Polar residues predominate over residues 187-202 (STNTELANPSSTTTRI). Residues 240 to 462 (PGTTPEVVSY…LKPLVDAGYS (223 aa)) enclose the PE-PPE domain.

The protein belongs to the mycobacterial PPE family.

This is an uncharacterized protein from Mycobacterium tuberculosis (strain CDC 1551 / Oshkosh).